Here is a 221-residue protein sequence, read N- to C-terminus: Potassium voltage-gated channel subfamily E member 4 (221 aa).

At 1–86 (MHFLTIYPNC…AGGGSGNGNE (86 aa)) the chain is on the extracellular side. An N-linked (GlcNAc...) asparagine glycan is attached at Asn-9. The span at 58–72 (LNSTHPGTAASSSPL) shows a compositional bias: polar residues. The segment at 58 to 77 (LNSTHPGTAASSSPLESRAA) is disordered. The chain crosses the membrane as a helical span at residues 87–107 (YFYILVVMSFYGIFLIGIMLG). Residues 108-221 (YMKSKRREKK…GSSENIHQNS (114 aa)) lie on the Cytoplasmic side of the membrane. Residues 175–221 (SVSSESSSPDVHLTIQEEGADDELEETSETPLNESSEGSSENIHQNS) are disordered. Residues 192-202 (EGADDELEETS) are compositionally biased toward acidic residues. Polar residues predominate over residues 203-221 (ETPLNESSEGSSENIHQNS).

This sequence belongs to the potassium channel KCNE family. Forms heterooligomers with KCNA3, inhibiting its activity by impairing localization to the cell membrane. The stoichiometry of KCNA3 and KCNE4 in the heterooligomers are 4:1, 4:2, 4:3 or 4:4 respectively. Increasing the number of KCNE4 subunits steadily slows the activation KCNA3 and decreases its abundance at the cell membrane. However, a single subunit of KCNE4 is sufficient for the cooperative enhancement of the inactivating function of the channel. However, a single subunit of KCNE4 is sufficient for the cooperative enhancement of the inactivating function of the channel. Interacts with KCNQ1; impairs KCNQ1 localization in lipid rafts and inhibits voltage-gated potassium channel activity. Predominantly expressed in embryo and adult uterus. Low expression found in kidney, small intestine, lung and heart. In terms of tissue distribution, detected in kidney, thymus, and uterus (at protein level).

The protein resides in the membrane. Ancillary protein that functions as a regulatory subunit of the voltage-gated potassium (Kv) channel complex composed of pore-forming and potassium-conducting alpha subunits and of regulatory beta subunits. KCNE4 beta subunit modulates the gating kinetics and enhances stability of the channel complex. Associates with KCNQ1/KVLTQ1 alpha subunit to inhibit potassium currents. Its function is as follows. May inhibit KCNQ4-mediated potassium currents. The protein is Potassium voltage-gated channel subfamily E member 4 of Homo sapiens (Human).